We begin with the raw amino-acid sequence, 997 residues long: Translation initiation factor IF-2 (997 aa).

Positions 36–415 (SMAGSLTTEE…ATQPLKAAKR (380 aa)) are disordered. Composition is skewed to basic and acidic residues over residues 45-65 (EAARVREHFAEQKQADAERSG) and 94-107 (AREEVAPPAEEKPA). Positions 108 to 126 (AVEAPAQAEPVAEAPAASP) are enriched in low complexity. Over residues 127-147 (HKVEEKAAPEAAKAEPAEKAK) the composition is skewed to basic and acidic residues. A compositionally biased stretch (low complexity) spans 151-162 (ARVVSAARVISR). Residues 163-181 (PGEEEEKKPEPVVESKPEP) are compositionally biased toward basic and acidic residues. Low complexity predominate over residues 182–196 (VAEISPVAAALAARE). Basic and acidic residues-rich tracts occupy residues 197–214 (AAARAEEKSSEKGEEKGA) and 241–252 (PEARTEAWKDAD). Gly residues predominate over residues 300–309 (GRPGAPGGPR). The span at 316–335 (PPRPGGPRPSGPGGPRPAGG) shows a compositional bias: pro residues. The span at 378 to 388 (GGRRDDDDSQR) shows a compositional bias: basic and acidic residues. The segment covering 390 to 399 (NRGKGRRKGG) has biased composition (basic residues). Positions 496 to 665 (PRPPVVTIMG…ALQSEIMELK (170 aa)) constitute a tr-type G domain. The segment at 505 to 512 (GHVDHGKT) is G1. A GTP-binding site is contributed by 505–512 (GHVDHGKT). The segment at 530–534 (GITQH) is G2. The interval 551 to 554 (DTPG) is G3. GTP is bound by residues 551–555 (DTPGH) and 605–608 (NKMD). The tract at residues 605–608 (NKMD) is G4. The interval 641-643 (AAK) is G5.

It belongs to the TRAFAC class translation factor GTPase superfamily. Classic translation factor GTPase family. IF-2 subfamily.

The protein localises to the cytoplasm. In terms of biological role, one of the essential components for the initiation of protein synthesis. Protects formylmethionyl-tRNA from spontaneous hydrolysis and promotes its binding to the 30S ribosomal subunits. Also involved in the hydrolysis of GTP during the formation of the 70S ribosomal complex. This Desulfovibrio desulfuricans (strain ATCC 27774 / DSM 6949 / MB) protein is Translation initiation factor IF-2.